Consider the following 380-residue polypeptide: Acyl-coenzyme A diphosphatase NUDT19 (380 aa).

Residues 8 to 264 (WKEAATLIVA…KIWIPPPQFY (257 aa)) form the Nudix hydrolase domain. A Nudix box motif is present at residues 115 to 136 (SLIPGEVATRICAIRETFEESG). 2 residues coordinate Mg(2+): glutamate 130 and glutamate 134. A Microbody targeting signal motif is present at residues 378–380 (NKL).

Belongs to the Nudix hydrolase family. As to quaternary structure, monomer. The cofactor is Mg(2+). It depends on Mn(2+) as a cofactor.

It is found in the peroxisome. It catalyses the reaction an acyl-CoA + H2O = an acyl-4'-phosphopantetheine + adenosine 3',5'-bisphosphate + 2 H(+). It carries out the reaction CoA + H2O = (R)-4'-phosphopantetheine + adenosine 3',5'-bisphosphate + 2 H(+). The enzyme catalyses hexanoyl-CoA + H2O = hexanoyl-4'-phosphopantetheine + adenosine 3',5'-bisphosphate + 2 H(+). The catalysed reaction is octanoyl-CoA + H2O = S-octanoyl-4'-phosphopantetheine + adenosine 3',5'-bisphosphate + 2 H(+). It catalyses the reaction butanoyl-CoA + H2O = S-butanoyl-4'-phosphopantetheine + adenosine 3',5'-bisphosphate + 2 H(+). It carries out the reaction propanoyl-CoA + H2O = propanoyl-4'-phosphopantetheine + adenosine 3',5'-bisphosphate + 2 H(+). The enzyme catalyses malonyl-CoA + H2O = malonyl-4'-phosphopantetheine + adenosine 3',5'-bisphosphate + 2 H(+). The catalysed reaction is succinyl-CoA + H2O = succinyl-4'-phosphopantetheine + adenosine 3',5'-bisphosphate + 2 H(+). It catalyses the reaction choloyl-CoA + H2O = S-choloyl-4'-phosphopantetheine + adenosine 3',5'-bisphosphate + 2 H(+). It carries out the reaction 4,8-dimethylnonanoyl-CoA + H2O = S-(4,8-dimethylnonanoyl)-4'-phosphopantetheine + adenosine 3',5'-bisphosphate + 2 H(+). The enzyme catalyses (9Z,12Z,15Z)-octadecatrienoyl-CoA + H2O = S-(9Z,12Z,15Z-octadecatrienoyl)-4'-phosphopantetheine + adenosine 3',5'-bisphosphate + 2 H(+). The catalysed reaction is (9Z,12Z)-octadecadienoyl-CoA + H2O = S-(9Z,12Z-octadecadienoyl)-4'-phosphopantetheine + adenosine 3',5'-bisphosphate + 2 H(+). It catalyses the reaction (9Z)-hexadecenoyl-CoA + H2O = S-(9Z-hexadecenoyl)-4'-phosphopantetheine + adenosine 3',5'-bisphosphate + 2 H(+). It carries out the reaction (9Z)-tetradecenoyl-CoA + H2O = S-(9Z-tetradecenoyl)-4'-phosphopantetheine + adenosine 3',5'-bisphosphate + 2 H(+). The enzyme catalyses (6Z)-octenoyl-CoA + H2O = S-(6Z-octenoyl)-4'-phosphopantetheine + adenosine 3',5'-bisphosphate + 2 H(+). The catalysed reaction is hexadecanoyl-CoA + H2O = S-hexadecanoyl-4'-phosphopantetheine + adenosine 3',5'-bisphosphate + 2 H(+). It catalyses the reaction tetradecanoyl-CoA + H2O = tetradecanoyl-4'-phosphopantetheine + adenosine 3',5'-bisphosphate + 2 H(+). It carries out the reaction dodecanoyl-CoA + H2O = S-dodecanoyl-4'-phosphopantetheine + adenosine 3',5'-bisphosphate + 2 H(+). The enzyme catalyses a 5'-end CoA-ribonucleoside in mRNA + H2O = a 5'-end phospho-adenosine-phospho-ribonucleoside in mRNA + (R)-4'-phosphopantetheine + 2 H(+). Fatty acyl-coenzyme A (CoA) diphosphatase that hydrolyzes fatty acyl-CoA to yield acyl-4'-phosphopantetheine and adenosine 3',5'-bisphosphate. Mediates the hydrolysis of a wide range of CoA esters, including choloyl-CoA and branched-chain fatty-acyl-CoA esters and at low substrate concentrations medium and long-chain fatty-acyl-CoA esters are the primary substrates. Highest activity seen with medium-chain acyl-CoA esters and higher rates of activity seen with the unsaturated acyl-CoA esters compared with the saturated esters. Exhibits decapping activity towards dpCoA-capped RNAs in vitro. This is Acyl-coenzyme A diphosphatase NUDT19 (nudt19) from Xenopus laevis (African clawed frog).